The following is a 136-amino-acid chain: Cytochrome b5 (136 aa).

A Cytochrome b5 heme-binding domain is found at 5–81 (TKVFTLAEVS…LDEYYVGDID (77 aa)). Positions 40 and 64 each coordinate heme. The helical transmembrane segment at 107–127 (FVVKLLQFLVPLIILGVAFGI) threads the bilayer.

It belongs to the cytochrome b5 family. In terms of tissue distribution, is highly expressed in developing seeds, moderately expressed in flowers, and is expressed at low levels in the leaf.

It localises to the endoplasmic reticulum membrane. The protein resides in the microsome membrane. Functionally, cytochrome b5 is a membrane bound hemoprotein which function as an electron carrier for several membrane bound oxygenases. May play a key role in the modification by desaturation of fatty acids in the endoplasmic reticulum, which in the developing seed is utilized for membrane synthesis and in the developmentally regulated production of large amounts of storage lipids. Is involved in the reduction of cytochrome P-450 and may therefore be involved in flavonoid biosynthesis in the petals. In Nicotiana tabacum (Common tobacco), this protein is Cytochrome b5.